The following is an 81-amino-acid chain: Small ribosomal subunit protein bS18 (81 aa).

The protein belongs to the bacterial ribosomal protein bS18 family. Part of the 30S ribosomal subunit. Forms a tight heterodimer with protein bS6.

Binds as a heterodimer with protein bS6 to the central domain of the 16S rRNA, where it helps stabilize the platform of the 30S subunit. The polypeptide is Small ribosomal subunit protein bS18 (Desulfotalea psychrophila (strain LSv54 / DSM 12343)).